The primary structure comprises 391 residues: Mannose-6-phosphate isomerase (391 aa).

Residues Gln97, His99, Glu134, and His255 each coordinate Zn(2+). Arg274 is an active-site residue. Lys280 carries the N6-acetyllysine modification.

The protein belongs to the mannose-6-phosphate isomerase type 1 family. Zn(2+) is required as a cofactor.

Its subcellular location is the cytoplasm. It carries out the reaction D-mannose 6-phosphate = D-fructose 6-phosphate. In terms of biological role, involved in the conversion of glucose to GDP-L-fucose, which can be converted to L-fucose, a capsular polysaccharide. This chain is Mannose-6-phosphate isomerase (manA), found in Escherichia coli (strain K12).